We begin with the raw amino-acid sequence, 174 residues long: Protein-lysine myristoyltransferase HlyC (174 aa).

Active-site residues include histidine 23 and aspartate 92. Histidine 151 is a heme binding site.

It belongs to the RTX toxin acyltransferase family. As to quaternary structure, monomer. In terms of processing, proteolytically cleaved by the protease systems ClpAP, ClpXP and FtsH, leading to its degradation.

The protein resides in the cytoplasm. It carries out the reaction tetradecanoyl-[ACP] + L-lysyl-[protein] = N(6)-tetradecanoyl-L-lysyl-[protein] + holo-[ACP] + H(+). The acyltransferase activity is inhibited by heme. Its function is as follows. Protein-lysine myristoyltransferase that catalyzes myristoylation of the protoxin (HlyA) at two internal lysine residues, thereby converting it to the active toxin. This is Protein-lysine myristoyltransferase HlyC from Escherichia coli.